The primary structure comprises 407 residues: Argininosuccinate synthase (407 aa).

Residues 16 to 24 and A44 contribute to the ATP site; that span reads AYSGGLDTS. The L-citrulline site is built by Y96 and S101. G126 contacts ATP. L-aspartate contacts are provided by T128, N132, and D133. N132 provides a ligand contact to L-citrulline. Positions 136, 185, 194, 270, and 282 each coordinate L-citrulline.

The protein belongs to the argininosuccinate synthase family. Type 1 subfamily. Homotetramer.

The protein localises to the cytoplasm. It carries out the reaction L-citrulline + L-aspartate + ATP = 2-(N(omega)-L-arginino)succinate + AMP + diphosphate + H(+). It participates in amino-acid biosynthesis; L-arginine biosynthesis; L-arginine from L-ornithine and carbamoyl phosphate: step 2/3. This chain is Argininosuccinate synthase, found in Shewanella sp. (strain W3-18-1).